Consider the following 142-residue polypeptide: Hemoglobin subunit alpha-2 (142 aa).

Residues Leu2–Arg142 enclose the Globin domain. Residue His59 coordinates O2. His88 provides a ligand contact to heme b.

Belongs to the globin family. In terms of assembly, heterotetramer of two alpha chains and two beta chains. Red blood cells.

Involved in oxygen transport from the lung to the various peripheral tissues. The chain is Hemoglobin subunit alpha-2 (hba2) from Xenopus borealis (Kenyan clawed frog).